The chain runs to 139 residues: Nucleoside diphosphate kinase (139 aa).

Positions 9, 57, 85, 91, 102, and 112 each coordinate ATP. Histidine 115 functions as the Pros-phosphohistidine intermediate in the catalytic mechanism.

It belongs to the NDK family. Homotetramer. It depends on Mg(2+) as a cofactor.

Its subcellular location is the cytoplasm. The catalysed reaction is a 2'-deoxyribonucleoside 5'-diphosphate + ATP = a 2'-deoxyribonucleoside 5'-triphosphate + ADP. It catalyses the reaction a ribonucleoside 5'-diphosphate + ATP = a ribonucleoside 5'-triphosphate + ADP. In terms of biological role, major role in the synthesis of nucleoside triphosphates other than ATP. The ATP gamma phosphate is transferred to the NDP beta phosphate via a ping-pong mechanism, using a phosphorylated active-site intermediate. The chain is Nucleoside diphosphate kinase from Desulfosudis oleivorans (strain DSM 6200 / JCM 39069 / Hxd3) (Desulfococcus oleovorans).